The primary structure comprises 342 residues: Isopentenyl-diphosphate delta-isomerase (342 aa).

A substrate-binding site is contributed by 11 to 12 (RK). FMN contacts are provided by residues Ser-68, 69-71 (SMT), Ser-99, and Asn-127. Residue 99–101 (SMR) coordinates substrate. Glu-163 contacts Mg(2+). FMN contacts are provided by residues Lys-194, Thr-224, and 295–296 (AG).

This sequence belongs to the IPP isomerase type 2 family. In terms of assembly, homooctamer. Dimer of tetramers. Requires FMN as cofactor. NADPH is required as a cofactor. The cofactor is Mg(2+).

It is found in the cytoplasm. The catalysed reaction is isopentenyl diphosphate = dimethylallyl diphosphate. Its function is as follows. Involved in the biosynthesis of isoprenoids. Catalyzes the 1,3-allylic rearrangement of the homoallylic substrate isopentenyl (IPP) to its allylic isomer, dimethylallyl diphosphate (DMAPP). The protein is Isopentenyl-diphosphate delta-isomerase of Rickettsia prowazekii (strain Madrid E).